The sequence spans 200 residues: Snake venom metalloproteinase BmooMP-I (200 aa).

A Peptidase M12B domain is found at 5–200; sequence RYIELAVVAD…HNPQCILNEP (196 aa). Ca(2+) contacts are provided by Glu8 and Asp92. Intrachain disulfides connect Cys116–Cys195, Cys155–Cys179, and Cys157–Cys162. A Zn(2+)-binding site is contributed by His141. Glu142 is an active-site residue. Zn(2+) is bound by residues His145 and His151. 2 residues coordinate Ca(2+): Cys195 and Asn198.

It belongs to the venom metalloproteinase (M12B) family. P-I subfamily. Monomer. The cofactor is Zn(2+). Expressed by the venom gland.

It localises to the secreted. Functionally, zinc metalloprotease that displays fibrinogenolytic, gelatinase and weak hemorrhagic activities. Degrades the three chain of fibrinogen Aalpha-chain (FGA), Bbeta-chain (FGB), and gamma (FGG). The sequence is that of Snake venom metalloproteinase BmooMP-I from Bothrops moojeni (Lance-headed viper).